Here is an 890-residue protein sequence, read N- to C-terminus: Calcium-transporting ATPase (890 aa).

Over 1 to 47 (MKFHEMGQTDLLEATNTSMKQGLTEKEVKKRLDKHGPNELQEGKKTS) the chain is Cytoplasmic. A helical transmembrane segment spans residues 48–68 (ALLLFFAQFKDFMVLVLLAAT). Residues 69–78 (LISGFLGEYV) lie on the Extracellular side of the membrane. A helical membrane pass occupies residues 79–99 (DAVAIIAIVFVNGILGFFQER). The Cytoplasmic segment spans residues 100–238 (RAEQSLQALK…TLSTPLQRRL (139 aa)). A helical transmembrane segment spans residues 239–258 (EQLGKILIVVALLLTVLVVA). Residues 259 to 270 (VGVIQGHDLYSM) lie on the Extracellular side of the membrane. Residues 271 to 288 (FLAGVSLAVAAIPEGLPA) form a helical membrane-spanning segment. Ca(2+) is bound by residues Val-279, Ala-280, Ile-282, and Glu-284. Over 289-688 (IVTVALSLGV…KEGRNIYENI (400 aa)) the chain is Cytoplasmic. The 4-aspartylphosphate intermediate role is filled by Asp-326. Residues Asp-633 and Asp-637 each contribute to the Mg(2+) site. Residues 689–708 (RKFIRYLLASNVGEILVMLF) form a helical membrane-spanning segment. Ca(2+) is bound by residues Asn-699 and Glu-702. Residues 709-718 (AMLLALPLPL) lie on the Extracellular side of the membrane. Residues 719–739 (VPIQILWVNLVTDGLPAMALG) traverse the membrane as a helical segment. Residues Asn-727, Thr-730, and Asp-731 each contribute to the Ca(2+) site. The Cytoplasmic segment spans residues 740–759 (MDQPEGDVMKRKPRHPKEGV). Residues 760-782 (FARKLGWKVVSRGFLIGVATILA) form a helical membrane-spanning segment. At 783 to 798 (FIIVYHRNPENLAYAQ) the chain is on the extracellular side. Residues 799-818 (TIAFATLVLAQLIHVFDCRS) traverse the membrane as a helical segment. The Cytoplasmic portion of the chain corresponds to 819–830 (ETSVFSRNPFQN). A helical transmembrane segment spans residues 831 to 849 (LYLIGAVLSSILLMLVVIY). Topologically, residues 850 to 864 (YPPLQPIFHTVAITP) are extracellular. A helical membrane pass occupies residues 865 to 885 (GDWMLVIGMSAIPTFLLAGSL). The Cytoplasmic portion of the chain corresponds to 886 to 890 (LTRKK).

Belongs to the cation transport ATPase (P-type) (TC 3.A.3) family. Type IIA subfamily. In terms of processing, phosphorylated in a Ca(2+)-dependent manner starting 4 hours after shifting to sporulation medium.

Its subcellular location is the cell membrane. The catalysed reaction is Ca(2+)(in) + ATP + H2O = Ca(2+)(out) + ADP + phosphate + H(+). Functionally, this magnesium-dependent enzyme catalyzes the hydrolysis of ATP coupled with the transport of calcium. The sequence is that of Calcium-transporting ATPase (yloB) from Bacillus subtilis (strain 168).